Consider the following 447-residue polypeptide: Argininosuccinate lyase (447 aa).

Belongs to the lyase 1 family. Argininosuccinate lyase subfamily.

Its subcellular location is the cytoplasm. It carries out the reaction 2-(N(omega)-L-arginino)succinate = fumarate + L-arginine. The protein operates within amino-acid biosynthesis; L-arginine biosynthesis; L-arginine from L-ornithine and carbamoyl phosphate: step 3/3. In Bacteroides fragilis (strain YCH46), this protein is Argininosuccinate lyase.